Consider the following 275-residue polypeptide: 2,3,4,5-tetrahydropyridine-2,6-dicarboxylate N-succinyltransferase (275 aa).

Arginine 108 and aspartate 145 together coordinate substrate.

Belongs to the transferase hexapeptide repeat family. Homotrimer.

It is found in the cytoplasm. It catalyses the reaction (S)-2,3,4,5-tetrahydrodipicolinate + succinyl-CoA + H2O = (S)-2-succinylamino-6-oxoheptanedioate + CoA. It participates in amino-acid biosynthesis; L-lysine biosynthesis via DAP pathway; LL-2,6-diaminopimelate from (S)-tetrahydrodipicolinate (succinylase route): step 1/3. The chain is 2,3,4,5-tetrahydropyridine-2,6-dicarboxylate N-succinyltransferase from Ruegeria pomeroyi (strain ATCC 700808 / DSM 15171 / DSS-3) (Silicibacter pomeroyi).